We begin with the raw amino-acid sequence, 439 residues long: Glutamyl-tRNA(Gln) amidotransferase subunit D (439 aa).

The Asparaginase/glutaminase domain occupies 88 to 419 (GKVKIISTGG…EEVKRIMLTN (332 aa)). Residues threonine 98, threonine 174, aspartate 175, and lysine 253 contribute to the active site.

This sequence belongs to the asparaginase 1 family. GatD subfamily. In terms of assembly, heterodimer of GatD and GatE.

The catalysed reaction is L-glutamyl-tRNA(Gln) + L-glutamine + ATP + H2O = L-glutaminyl-tRNA(Gln) + L-glutamate + ADP + phosphate + H(+). In terms of biological role, allows the formation of correctly charged Gln-tRNA(Gln) through the transamidation of misacylated Glu-tRNA(Gln) in organisms which lack glutaminyl-tRNA synthetase. The reaction takes place in the presence of glutamine and ATP through an activated gamma-phospho-Glu-tRNA(Gln). The GatDE system is specific for glutamate and does not act on aspartate. This is Glutamyl-tRNA(Gln) amidotransferase subunit D from Metallosphaera sedula (strain ATCC 51363 / DSM 5348 / JCM 9185 / NBRC 15509 / TH2).